We begin with the raw amino-acid sequence, 441 residues long: Ribulose bisphosphate carboxylase large chain (441 aa).

The residue at position 5 (Lys-5) is an N6,N6,N6-trimethyllysine. Substrate is bound by residues Asn-114 and Thr-164. Lys-166 acts as the Proton acceptor in catalysis. Lys-168 is a binding site for substrate. Mg(2+)-binding residues include Lys-192, Asp-194, and Glu-195. Lys-192 is modified (N6-carboxylysine). The active-site Proton acceptor is the His-285. Substrate-binding residues include Arg-286, His-318, and Ser-370.

This sequence belongs to the RuBisCO large chain family. Type I subfamily. In terms of assembly, heterohexadecamer of 8 large chains and 8 small chains; disulfide-linked. The disulfide link is formed within the large subunit homodimers. Mg(2+) serves as cofactor. The disulfide bond which can form in the large chain dimeric partners within the hexadecamer appears to be associated with oxidative stress and protein turnover.

It is found in the plastid. The protein resides in the chloroplast. It carries out the reaction 2 (2R)-3-phosphoglycerate + 2 H(+) = D-ribulose 1,5-bisphosphate + CO2 + H2O. The enzyme catalyses D-ribulose 1,5-bisphosphate + O2 = 2-phosphoglycolate + (2R)-3-phosphoglycerate + 2 H(+). RuBisCO catalyzes two reactions: the carboxylation of D-ribulose 1,5-bisphosphate, the primary event in carbon dioxide fixation, as well as the oxidative fragmentation of the pentose substrate in the photorespiration process. Both reactions occur simultaneously and in competition at the same active site. The sequence is that of Ribulose bisphosphate carboxylase large chain from Pellaea andromedifolia (Coffee fern).